Reading from the N-terminus, the 305-residue chain is NAD kinase 2 (305 aa).

Aspartate 78 serves as the catalytic Proton acceptor. Residues 78–79 (DG), 152–153 (NE), aspartate 182, 193–198 (TAYSLS), and asparagine 251 each bind NAD(+).

Belongs to the NAD kinase family. The cofactor is a divalent metal cation.

The protein localises to the cytoplasm. The enzyme catalyses NAD(+) + ATP = ADP + NADP(+) + H(+). In terms of biological role, involved in the regulation of the intracellular balance of NAD and NADP, and is a key enzyme in the biosynthesis of NADP. Catalyzes specifically the phosphorylation on 2'-hydroxyl of the adenosine moiety of NAD to yield NADP. Functions as a growth repressor under light-activated heterotrophic growth conditions and light and dark cycle conditions in the presence of glucose. NADP(H)/NAD(H) maintenance by slr0400 probably plays a significant role in modulating glycolysis and the TCA cycle to repress the growth rate and maintain the photosynthetic capacity. The chain is NAD kinase 2 from Synechocystis sp. (strain ATCC 27184 / PCC 6803 / Kazusa).